The following is a 393-amino-acid chain: MTHTTLFTSESVSEGHPDKVADQISDAVLDALISQDPNCRVACEAVVKSGMVFVAGEITTNAWADVEQITRNTVLQIGYNDPHLGFDGETCAVVTAIGKQSPDIVMGVDGREDQELGAGDQGLMFGYASRETDVFMPAPITYAHRLVRQQALLRKNGRLPWLRPDAKSQVTLRYENGKPVAADCIVLSTQHSPEISQESLREAVIDEIIKPIMPPHWLDKHTRFLVNPTGRFVIGGPVGDCGLTGRKIIVDTYGGMARHGGGCFSGKDPSKVDRSGAYAARYVAKNIVAGGLADRCEIQVSYAIGVAEPTSISVETFGTGKIDEVRTQQLIKEHFDLRPGKIIEELNLLRSIYKATATYGHFGREEPEFTWERTDKAEILREAAGLAAANVTN.

His16 contacts ATP. Asp18 serves as a coordination point for Mg(2+). Glu44 contacts K(+). The L-methionine site is built by Glu57 and Gln100. Residues 100–110 (QSPDIVMGVDG) form a flexible loop region. Residues 165 to 167 (DAK), 231 to 232 (RF), Asp240, 246 to 247 (RK), and Lys267 contribute to the ATP site. Asp240 serves as a coordination point for L-methionine. Lys271 contacts L-methionine.

It belongs to the AdoMet synthase family. As to quaternary structure, homotetramer; dimer of dimers. Mg(2+) is required as a cofactor. K(+) serves as cofactor.

It is found in the cytoplasm. The enzyme catalyses L-methionine + ATP + H2O = S-adenosyl-L-methionine + phosphate + diphosphate. Its pathway is amino-acid biosynthesis; S-adenosyl-L-methionine biosynthesis; S-adenosyl-L-methionine from L-methionine: step 1/1. In terms of biological role, catalyzes the formation of S-adenosylmethionine (AdoMet) from methionine and ATP. The overall synthetic reaction is composed of two sequential steps, AdoMet formation and the subsequent tripolyphosphate hydrolysis which occurs prior to release of AdoMet from the enzyme. This is S-adenosylmethionine synthase from Coxiella burnetii (strain Dugway 5J108-111).